The following is a 338-amino-acid chain: Transcription factor AP-4 (338 aa).

In terms of domain architecture, bHLH spans 48–99 (IRREIANSNERRRMQSINAGFQSLKTLIPHTDGEKLSKAAILQQTAEYIFSL). The tract at residues 100 to 120 (EQEKTRLLQQNTQLKRFIQEL) is leucine-zipper 1. The segment at 118–141 (QELSGSSPKRRRAEDKDEGIGSPD) is disordered. A phosphoserine mark is found at Ser123, Ser124, and Ser139. Lys147 is covalently cross-linked (Glycyl lysine isopeptide (Lys-Gly) (interchain with G-Cter in SUMO2)). Residues 151-179 (LRREMIELRQQLDKERSVRMMLEEQVRSL) are leucine-zipper 2. Residues Lys187, Lys189, and Lys285 each participate in a glycyl lysine isopeptide (Lys-Gly) (interchain with G-Cter in SUMO2) cross-link. The segment covering 283–294 (QEKQELEEEQRR) has biased composition (basic and acidic residues). The interval 283–338 (QEKQELEEEQRRAVIVKPVRSCPEAPTSDTASDSEASDSDAMDQSREEPSGDGELP) is disordered.

As to quaternary structure, efficient DNA binding requires dimerization with another bHLH protein. Homodimer.

The protein resides in the nucleus. Transcription factor that activates both viral and cellular genes by binding to the symmetrical DNA sequence 5'-CAGCTG-3'. The sequence is that of Transcription factor AP-4 (TFAP4) from Homo sapiens (Human).